Consider the following 426-residue polypeptide: Histidine--tRNA ligase (426 aa).

The protein belongs to the class-II aminoacyl-tRNA synthetase family. Homodimer.

The protein localises to the cytoplasm. It carries out the reaction tRNA(His) + L-histidine + ATP = L-histidyl-tRNA(His) + AMP + diphosphate + H(+). This is Histidine--tRNA ligase from Prochlorococcus marinus (strain MIT 9301).